Consider the following 203-residue polypeptide: Glycerol-3-phosphate acyltransferase (203 aa).

The next 4 helical transmembrane spans lie at 4 to 24 (MAVT…AVLI), 80 to 100 (PVLL…PLFF), 117 to 137 (PIGL…AILF), and 139 to 159 (YSSL…WMIK).

This sequence belongs to the PlsY family. In terms of assembly, probably interacts with PlsX.

It localises to the cell inner membrane. It catalyses the reaction an acyl phosphate + sn-glycerol 3-phosphate = a 1-acyl-sn-glycero-3-phosphate + phosphate. It functions in the pathway lipid metabolism; phospholipid metabolism. Catalyzes the transfer of an acyl group from acyl-phosphate (acyl-PO(4)) to glycerol-3-phosphate (G3P) to form lysophosphatidic acid (LPA). This enzyme utilizes acyl-phosphate as fatty acyl donor, but not acyl-CoA or acyl-ACP. This chain is Glycerol-3-phosphate acyltransferase, found in Vibrio vulnificus (strain YJ016).